Consider the following 285-residue polypeptide: MRQVTERNAMRELSRAWRARGERIGLVPTMGNLHRGHLELVERLARRVDRLVVSIFVNPLQFGPGEDYDAYPRTLEADLNALEGRGVDAVFAPNAREMYPGVEPPWTGVDVPALTQTLCGAARPGHFAGVAVVVIKLLNIVEPDVAAFGRKDYQQLQVIRRVVGDLDLSVEIVEVPIVREADGLALSSRNGYMDGEQRRRAPALYATLCEVAAALEAGRRDWSQLEAQACRRLEAAGFDAAEYVAVRRCDDLAEPQGDEPRLVCLGAARLGAARLIDNVEARLKR.

ATP is bound at residue 30 to 37; it reads MGNLHRGH. The active-site Proton donor is the His37. Gln61 contacts (R)-pantoate. Residue Gln61 participates in beta-alanine binding. 149–152 contributes to the ATP binding site; it reads GRKD. Residue Gln155 coordinates (R)-pantoate. ATP is bound by residues Val178 and 186-189; that span reads LSSR.

The protein belongs to the pantothenate synthetase family. In terms of assembly, homodimer.

The protein resides in the cytoplasm. It catalyses the reaction (R)-pantoate + beta-alanine + ATP = (R)-pantothenate + AMP + diphosphate + H(+). It participates in cofactor biosynthesis; (R)-pantothenate biosynthesis; (R)-pantothenate from (R)-pantoate and beta-alanine: step 1/1. Its function is as follows. Catalyzes the condensation of pantoate with beta-alanine in an ATP-dependent reaction via a pantoyl-adenylate intermediate. This chain is Pantothenate synthetase, found in Halorhodospira halophila (strain DSM 244 / SL1) (Ectothiorhodospira halophila (strain DSM 244 / SL1)).